We begin with the raw amino-acid sequence, 942 residues long: MGLTKQYLRYVASAVFGLIGSQKGNIVFVTLRGEKGRYVAVPACEHVFIWDLRKGEKILILQGNKQEVTCLCPSPDGLHLAVGYEDGAIRIFSLLSGEGNITFNGHKAAVTSLKYDQLGGRLASGSKDTDVIIWDVINESGLYRLKGHKDAVTQALFLRERNLLVTSGKDTMVKWWDLDNQHCFKTMVGHRTEVWGLVLVSEEKRLITGAADSELRAWDIDYLQEIDDPEEPEPKKIKECPGIQDTPESEDSTLEADDEKSEDRILSCSKAGSIMREGRDRVVNLAVDKTGRILACHGTDSVLEVFCILSKAEVQKKMDKKLKKARKKARLNSANEEEDPETSVSMTLQDEILRVAKIKTSAKIKSFDLIHSPQGELKAVFLLQNNLVELYSLNASLPAPQPVRTSRITIGGHRSDVRTLSFSSDNIAVLSAAADSIKIWNRSTLQCIRTMPCEYALCSFFVPGDRQVVIGTKTGNLQLYDLASGTLLETIAAHDGALWSMSLSPDQRGFVTGGADKAVKFWDFELVTDKNSTQKRLSVKQTRTLQLDEDVLCVSYSPNQKLLAVSLLDCTVKVFYVDTLKFFLSLYGHKLPVLCMDISHDGALIATGSADRNVKIWGLDFGDCHRSLFAHDDSVMYLRFVPKSHLFFTAGKDHKIKQWDADKFEHIQTLEGHHQEIWCLAVSPSGDYVVSASHDKSLRLWERTREPLILEEEREMQREAEYEESVAKEDQPAVPGETQGDNYFTGKKTIETVKAAERIMEAIELHREETAKMKEHRAICKAAGKEVPLPVNPILMAHGNISPSAYVLETFKGIRSSELEEALLVLPFSYVPDVLTLFNEFIQTGLDVELLCRCLFFLLRIHFGQITSNQMLVPVIEKLKETTISKVRQVQDAIGFNMAGLDYLKRECEAKSEVMFFAEATSHLEEKKKKRKNRKRMILTLT.

WD repeat units follow at residues 21–60 (SQKGNIVFVTLRGEKGRYVAVPACEHVFIWDLRKGEKILI), 63–102 (GNKQEVTCLCPSPDGLHLAVGYEDGAIRIFSLLSGEGNIT), 105–144 (GHKAAVTSLKYDQLGGRLASGSKDTDVIIWDVINESGLYR), 147–186 (GHKDAVTQALFLRERNLLVTSGKDTMVKWWDLDNQHCFKT), and 189–228 (GHRTEVWGLVLVSEEKRLITGAADSELRAWDIDYLQEIDD). Residues 230-263 (EEPEPKKIKECPGIQDTPESEDSTLEADDEKSED) are disordered. The segment covering 247–260 (PESEDSTLEADDEK) has biased composition (acidic residues). A Phosphoserine modification is found at S249. 8 WD repeats span residues 277–316 (EGRDRVVNLAVDKTGRILACHGTDSVLEVFCILSKAEVQK), 412–450 (GHRSDVRTLSFSSDNIAVLSAAADSIKIWNRSTLQCIRT), 452–490 (PCEYALCSFFVPGDRQVVIGTKTGNLQLYDLASGTLLET), 493–532 (AHDGALWSMSLSPDQRGFVTGGADKAVKFWDFELVTDKNS), 546–585 (QLDEDVLCVSYSPNQKLLAVSLLDCTVKVFYVDTLKFFLS), 588–629 (GHKL…RSLF), 630–669 (AHDDSVMYLRFVPKSHLFFTAGKDHKIKQWDADKFEHIQT), and 672–711 (GHHQEIWCLAVSPSGDYVVSASHDKSLRLWERTREPLILE). A Glycyl lysine isopeptide (Lys-Gly) (interchain with G-Cter in SUMO2) cross-link involves residue K473. The segment at 723 to 742 (EESVAKEDQPAVPGETQGDN) is disordered. Position 725 is a phosphoserine (S725).

This sequence belongs to the WD repeat WDR3/UTP12 family. Part of the small subunit (SSU) processome, composed of more than 70 proteins and the RNA chaperone small nucleolar RNA (snoRNA) U3.

The protein localises to the nucleus. Its subcellular location is the nucleolus. Part of the small subunit (SSU) processome, first precursor of the small eukaryotic ribosomal subunit. During the assembly of the SSU processome in the nucleolus, many ribosome biogenesis factors, an RNA chaperone and ribosomal proteins associate with the nascent pre-rRNA and work in concert to generate RNA folding, modifications, rearrangements and cleavage as well as targeted degradation of pre-ribosomal RNA by the RNA exosome. This is WD repeat-containing protein 3 (Wdr3) from Mus musculus (Mouse).